Reading from the N-terminus, the 108-residue chain is Nucleoid-associated protein BARBAKC583_1239 (108 aa).

The protein belongs to the YbaB/EbfC family. As to quaternary structure, homodimer.

Its subcellular location is the cytoplasm. The protein localises to the nucleoid. In terms of biological role, binds to DNA and alters its conformation. May be involved in regulation of gene expression, nucleoid organization and DNA protection. This chain is Nucleoid-associated protein BARBAKC583_1239, found in Bartonella bacilliformis (strain ATCC 35685 / KC583 / Herrer 020/F12,63).